The chain runs to 393 residues: NAD(P)H-quinone oxidoreductase subunit H, chloroplastic (393 aa).

The protein belongs to the complex I 49 kDa subunit family. NDH is composed of at least 16 different subunits, 5 of which are encoded in the nucleus.

It is found in the plastid. The protein localises to the chloroplast thylakoid membrane. It carries out the reaction a plastoquinone + NADH + (n+1) H(+)(in) = a plastoquinol + NAD(+) + n H(+)(out). The catalysed reaction is a plastoquinone + NADPH + (n+1) H(+)(in) = a plastoquinol + NADP(+) + n H(+)(out). NDH shuttles electrons from NAD(P)H:plastoquinone, via FMN and iron-sulfur (Fe-S) centers, to quinones in the photosynthetic chain and possibly in a chloroplast respiratory chain. The immediate electron acceptor for the enzyme in this species is believed to be plastoquinone. Couples the redox reaction to proton translocation, and thus conserves the redox energy in a proton gradient. The protein is NAD(P)H-quinone oxidoreductase subunit H, chloroplastic of Olimarabidopsis pumila (Dwarf rocket).